The chain runs to 325 residues: Lipoyl synthase (325 aa).

The disordered stretch occupies residues 1-24 (MPIAPDRVRHPEKANRPDNPIQRK). The [4Fe-4S] cluster site is built by cysteine 54, cysteine 59, cysteine 65, cysteine 80, cysteine 84, cysteine 87, and serine 293. A Radical SAM core domain is found at 66 to 282 (WKKKHATFMI…VTVGRGKGFL (217 aa)).

This sequence belongs to the radical SAM superfamily. Lipoyl synthase family. [4Fe-4S] cluster serves as cofactor.

The protein localises to the cytoplasm. It carries out the reaction [[Fe-S] cluster scaffold protein carrying a second [4Fe-4S](2+) cluster] + N(6)-octanoyl-L-lysyl-[protein] + 2 oxidized [2Fe-2S]-[ferredoxin] + 2 S-adenosyl-L-methionine + 4 H(+) = [[Fe-S] cluster scaffold protein] + N(6)-[(R)-dihydrolipoyl]-L-lysyl-[protein] + 4 Fe(3+) + 2 hydrogen sulfide + 2 5'-deoxyadenosine + 2 L-methionine + 2 reduced [2Fe-2S]-[ferredoxin]. It functions in the pathway protein modification; protein lipoylation via endogenous pathway; protein N(6)-(lipoyl)lysine from octanoyl-[acyl-carrier-protein]: step 2/2. Catalyzes the radical-mediated insertion of two sulfur atoms into the C-6 and C-8 positions of the octanoyl moiety bound to the lipoyl domains of lipoate-dependent enzymes, thereby converting the octanoylated domains into lipoylated derivatives. This Rhodospirillum centenum (strain ATCC 51521 / SW) protein is Lipoyl synthase.